A 252-amino-acid chain; its full sequence is Ribosomal RNA small subunit methyltransferase J (252 aa).

S-adenosyl-L-methionine contacts are provided by residues Arg104–Asp105, Glu120–Arg121, Ser156–Ser157, and Asp174.

The protein belongs to the methyltransferase superfamily. RsmJ family.

It localises to the cytoplasm. It carries out the reaction guanosine(1516) in 16S rRNA + S-adenosyl-L-methionine = N(2)-methylguanosine(1516) in 16S rRNA + S-adenosyl-L-homocysteine + H(+). Its function is as follows. Specifically methylates the guanosine in position 1516 of 16S rRNA. The protein is Ribosomal RNA small subunit methyltransferase J of Yersinia enterocolitica serotype O:8 / biotype 1B (strain NCTC 13174 / 8081).